The primary structure comprises 172 residues: Cold-inducible RNA-binding protein (172 aa).

The RRM domain occupies 6–84; sequence GKLFVGGLSF…RQIRVDQAGK (79 aa). Positions 70–172 are disordered; sequence KSVDGRQIRV…SYDSYATHNE (103 aa). 2 stretches are compositionally biased toward gly residues: residues 93–105 and 114–137; these read YRGG…GFFR and FSRG…GYGG. Phosphoserine occurs at positions 130, 138, 146, 156, 159, and 163. Low complexity predominate over residues 138-172; it reads SRDYYASRSQGGSYGYRSSGGSYRDSYDSYATHNE.

In terms of assembly, interacts with EIF4G1. Associates with ribosomes. Post-translationally, methylated on arginine residues. Methylation of the RGG motifs is a prerequisite for recruitment into SGs. Phosphorylated by CK2, GSK3A and GSK3B. Phosphorylation by GSK3B increases RNA-binding activity to the TXN 3'-UTR transcript upon exposure to UV radiation. As to expression, ubiquitous.

It is found in the nucleus. The protein resides in the nucleoplasm. Its subcellular location is the cytoplasm. Its function is as follows. Cold-inducible mRNA binding protein that plays a protective role in the genotoxic stress response by stabilizing transcripts of genes involved in cell survival. Promotes assembly of stress granules (SGs), when overexpressed. Seems to play an essential role in cold-induced suppression of cell proliferation. Acts as a translational repressor. Acts as a translational activator. Binds specifically to the 3'-untranslated regions (3'-UTRs) of stress-responsive transcripts RPA2 and TXN. This is Cold-inducible RNA-binding protein (Cirbp) from Mus musculus (Mouse).